Consider the following 138-residue polypeptide: Large-conductance mechanosensitive channel (138 aa).

3 helical membrane passes run 15-35 (VDLA…NSIV), 38-58 (IIMP…MFIQ), and 80-100 (GNFI…FLVV).

This sequence belongs to the MscL family. As to quaternary structure, homopentamer.

Its subcellular location is the cell inner membrane. In terms of biological role, channel that opens in response to stretch forces in the membrane lipid bilayer. May participate in the regulation of osmotic pressure changes within the cell. This chain is Large-conductance mechanosensitive channel, found in Brucella canis (strain ATCC 23365 / NCTC 10854 / RM-666).